A 755-amino-acid chain; its full sequence is Xaa-Pro dipeptidyl-peptidase (755 aa).

Active-site charge relay system residues include Ser348, Asp468, and His498.

It belongs to the peptidase S15 family. Homodimer.

The protein resides in the cytoplasm. The enzyme catalyses Hydrolyzes Xaa-Pro-|- bonds to release unblocked, N-terminal dipeptides from substrates including Ala-Pro-|-p-nitroanilide and (sequentially) Tyr-Pro-|-Phe-Pro-|-Gly-Pro-|-Ile.. Removes N-terminal dipeptides sequentially from polypeptides having unsubstituted N-termini provided that the penultimate residue is proline. This is Xaa-Pro dipeptidyl-peptidase from Streptococcus thermophilus (strain ATCC BAA-250 / LMG 18311).